We begin with the raw amino-acid sequence, 89 residues long: MESIQLINIGFGNIVSANRVIAIVSPESAPIKRIITDARDRGQLVDATYGRRTRAVIITDSSHVVLSAIQPETVAHRFVVSKEAHANSN.

The protein belongs to the RemA family.

In Rippkaea orientalis (strain PCC 8801 / RF-1) (Cyanothece sp. (strain PCC 8801)), this protein is Putative regulatory protein PCC8801_0196.